The sequence spans 183 residues: Translocon-associated protein subunit beta (183 aa).

The signal sequence occupies residues 1 to 17 (MRLLASVLLALFAVSHA). Over 18–149 (EEGARLLASK…DRRFSPHFLD (132 aa)) the chain is Lumenal. N-linked (GlcNAc...) asparagine glycosylation is found at Asn88 and Asn104. A helical membrane pass occupies residues 150–169 (WAAFGVMTLPSIGIPLLLWY). Residues 170 to 183 (SSKRKYDTPKSKKN) lie on the Cytoplasmic side of the membrane.

The protein belongs to the TRAP-beta family. Heterotetramer of TRAP-alpha, TRAP-beta, TRAP-delta and TRAP-gamma. Interacts with STING1.

The protein localises to the endoplasmic reticulum membrane. TRAP proteins are part of a complex whose function is to bind calcium to the ER membrane and thereby regulate the retention of ER resident proteins. The sequence is that of Translocon-associated protein subunit beta (SSR2) from Canis lupus familiaris (Dog).